The chain runs to 124 residues: Small ribosomal subunit protein uS12 (124 aa).

3-methylthioaspartic acid is present on Asp89.

The protein belongs to the universal ribosomal protein uS12 family. In terms of assembly, part of the 30S ribosomal subunit. Contacts proteins S8 and S17. May interact with IF1 in the 30S initiation complex.

Functionally, with S4 and S5 plays an important role in translational accuracy. Interacts with and stabilizes bases of the 16S rRNA that are involved in tRNA selection in the A site and with the mRNA backbone. Located at the interface of the 30S and 50S subunits, it traverses the body of the 30S subunit contacting proteins on the other side and probably holding the rRNA structure together. The combined cluster of proteins S8, S12 and S17 appears to hold together the shoulder and platform of the 30S subunit. This is Small ribosomal subunit protein uS12 from Vibrio cholerae serotype O1 (strain ATCC 39315 / El Tor Inaba N16961).